The following is a 305-amino-acid chain: Tyrosine recombinase XerC (305 aa).

Residues 1–93 (MVLDGFAAYF…AWRQYCAWLV (93 aa)) enclose the Core-binding (CB) domain. The Tyr recombinase domain maps to 114–294 (RVPKALPQEW…DFDHIARLYD (181 aa)). Active-site residues include arginine 155, lysine 179, histidine 246, arginine 249, and histidine 272. Catalysis depends on tyrosine 281, which acts as the O-(3'-phospho-DNA)-tyrosine intermediate.

The protein belongs to the 'phage' integrase family. XerC subfamily. As to quaternary structure, forms a cyclic heterotetrameric complex composed of two molecules of XerC and two molecules of XerD.

The protein localises to the cytoplasm. In terms of biological role, site-specific tyrosine recombinase, which acts by catalyzing the cutting and rejoining of the recombining DNA molecules. The XerC-XerD complex is essential to convert dimers of the bacterial chromosome into monomers to permit their segregation at cell division. It also contributes to the segregational stability of plasmids. This is Tyrosine recombinase XerC from Neisseria gonorrhoeae (strain ATCC 700825 / FA 1090).